A 106-amino-acid chain; its full sequence is MVQVISNLDEFNKLTNSGKIIIIDFWATWCGPCRVISPIFEKFSEKYGANNIVFAKVDVDTASDISEEAKIRAMPTFQVYKDGQKIDELVGANPTALESLVQKSLA.

Residues 2-106 (VQVISNLDEF…LESLVQKSLA (105 aa)) enclose the Thioredoxin domain. Catalysis depends on nucleophile residues Cys-30 and Cys-33. Cys-30 and Cys-33 form a disulfide bridge.

It belongs to the thioredoxin family.

Functionally, participates in various redox reactions through the reversible oxidation of its active center dithiol to a disulfide and catalyzes dithiol-disulfide exchange reactions. This Coprinus comatus (Shaggy mane) protein is Thioredoxin.